A 2442-amino-acid chain; its full sequence is CREB-binding protein (2442 aa).

Disordered regions lie at residues 1–41 (MAEN…NDLP) and 74–179 (LRGG…CMNA). An N-acetylalanine modification is found at Ala-2. Residues 20 to 30 (PGFSANDSTDF) are compositionally biased toward polar residues. Residues 80 to 90 (SSINPGIGNVS) show a composition bias toward low complexity. A Phosphoserine modification is found at Ser-121. Positions 122 to 131 (PLSQGDSSAP) are enriched in polar residues. The residue at position 124 (Ser-124) is a Phosphoserine; by ATM. Positions 136–150 (QAASTSGPTPAASQA) are enriched in low complexity. A compositionally biased stretch (polar residues) spans 151–172 (LNPQAQKQVGLATSSPATSQTG). Position 220 is an omega-N-methylarginine (Arg-220). The interaction with SRCAP stretch occupies residues 227-410 (PTPAMQGASS…GKACQVAHCA (184 aa)). A disordered region spans residues 266-290 (KMGITGNTSPFGQPFSQAGGQPMGA). The segment covering 270–284 (TGNTSPFGQPFSQAG) has biased composition (polar residues). The TAZ-type 1 zinc-finger motif lies at 347 to 433 (DPEKRKLIQQ…RHDCPVCLPL (87 aa)). Residues His-363, Cys-367, Cys-380, Cys-385, His-394, Cys-398, Cys-404, Cys-409, His-418, Cys-422, Cys-427, and Cys-430 each contribute to the Zn(2+) site. One can recognise a KIX domain in the interval 587–666 (GVRKGWHEHV…KIYKIQKELE (80 aa)). 2 positions are modified to asymmetric dimethylarginine: Arg-601 and Arg-625. Residue Lys-657 is modified to N6-acetyllysine. Composition is skewed to polar residues over residues 794 to 805 (LPQNQFPSSSGA) and 814 to 823 (PAQTGVSQGQ). Residues 794–1083 (LPQNQFPSSS…STSPSQPRKK (290 aa)) form a disordered region. 2 stretches are compositionally biased toward pro residues: residues 844–860 (PCPPVTQSPLHPTPPPA) and 876–885 (GMTPPQPAAP). Low complexity-rich tracts occupy residues 886 to 929 (TQPS…VTPQ) and 937 to 952 (PSVATPQSSQQQPTPV). Residues 973–988 (PTPSSVASAETNSQQP) show a composition bias toward polar residues. A Glycyl lysine isopeptide (Lys-Gly) (interchain with G-Cter in SUMO1) cross-link involves residue Lys-998. Positions 1011 to 1021 (GESKGEPRSEM) are enriched in basic and acidic residues. Residue Lys-1014 is modified to N6-acetyllysine. Ser-1030 carries the phosphoserine modification. Over residues 1032 to 1059 (VKEETDIAEQKSEPMEVDEKKPEVKVEV) the composition is skewed to basic and acidic residues. Residues Lys-1033 and Lys-1056 each participate in a glycyl lysine isopeptide (Lys-Gly) (interchain with G-Cter in SUMO1) cross-link. Positions 1066–1078 (SSNGTASQSTSPS) are enriched in low complexity. Ser-1076 carries the post-translational modification Phosphoserine. The 108-residue stretch at 1085–1192 (FKPEELRQAL…EVFEQEIDPV (108 aa)) folds into the Bromo domain. The tract at residues 1124 to 1170 (DYFDIVKNPMDLSTIKRKLDTGQYQEPWQYVDDVWLMFNNAWLYNRK) is interaction with histone. Positions 1162-1180 (NNAWLYNRKTSRVYKFCSK) are interaction with ASF1A. Lys-1216 is subject to N6-acetyllysine. A CBP/p300-type HAT domain is found at 1323–1700 (KFSAKRLQTT…MLVELHTQGQ (378 aa)). A phosphoserine; by IKKA mark is found at Ser-1382 and Ser-1386. Residues 1433–1435 (YLD) form an interaction with histone region. Acetyl-CoA contacts are provided by residues 1434–1436 (LDS), 1446–1447 (RT), Ile-1493, Arg-1498, and Trp-1502. Residues 1460–1891 (YVKKLGYVTG…LPSPTSAPPG (432 aa)) form an interaction with TRERF1 region. Positions 1556-1568 (LEQEEEERKKEES) are enriched in basic and acidic residues. The disordered stretch occupies residues 1556–1615 (LEQEEEERKKEESTAASETTEGSQGDSKNAKKKNNKKTNKNKSSISRANKKKPSMPNVSN). An N6-acetyllysine mark is found at Lys-1583, Lys-1591, Lys-1592, Lys-1595, and Lys-1597. The segment covering 1585–1595 (AKKKNNKKTNK) has biased composition (basic residues). The ZZ-type zinc finger occupies 1702 to 1750 (RFVYTCNECKHHVETRWHCTVCEDYDLCINCYNTKSHAHKMVKWGLGLD). Zn(2+) contacts are provided by Cys-1707, Cys-1710, Cys-1720, Cys-1723, Cys-1729, Cys-1732, His-1738, and His-1740. 2 positions are modified to N6-acetyllysine: Lys-1741 and Lys-1744. Phosphoserine is present on Ser-1763. The TAZ-type 2 zinc finger occupies 1765–1846 (QESRRLSIQR…KCPVPFCLNI (82 aa)). Disordered stretches follow at residues 1874 to 1959 (TRNV…VEAA) and 1977 to 2028 (INNS…PLPQ). Over residues 1900–1912 (PQTPQPPAQPQPS) the composition is skewed to pro residues. The segment covering 1925–1940 (ARTQPPTTVSTGKPTS) has biased composition (polar residues). A compositionally biased stretch (pro residues) spans 1943 to 1954 (PAPPPPAQPPPA). Over residues 2018–2027 (PGQWQQAPLP) the composition is skewed to low complexity. Ser-2063, Ser-2076, and Ser-2079 each carry phosphoserine. Composition is skewed to low complexity over residues 2112-2137 (QPGMQPQPGLQSQPGMQPQPGMHQQP), 2146-2160 (QAGVPRPGVPPQQQA), 2196-2219 (QLLQQQQQQQQQQQQQQQQQQGSA), 2228-2263 (HGQFQQPQGPGGYPPAMQQQQRMQQHLPLQGSSMGQ), and 2294-2305 (RILQQQQMKQQI). Disordered regions lie at residues 2112-2263 (QPGM…SMGQ) and 2294-2433 (RILQ…TTGD). 2 stretches are compositionally biased toward polar residues: residues 2315-2327 (SPQQHMLSGQPQA) and 2334-2343 (QIATSLSNQV). The span at 2349–2372 (VQSPRPQSQPPHSSPSPRIQPQPS) shows a compositional bias: pro residues. Ser-2351 carries the phosphoserine modification. The span at 2411-2424 (QLNTPSRSALSSEL) shows a compositional bias: polar residues.

Found in a complex containing NCOA2; NCOA3; IKKA; IKKB and IKBKG. Probably part of a complex with HIF1A and EP300. Interacts with GATA1; the interaction results in acetylation and enhancement of transcriptional activity of GATA1. Interacts with MAF and ZCCHC12. Interacts with DAXX; the interaction is dependent on CBP sumoylation and results in suppression of the transcriptional activity via recruitment of HDAC2 to DAXX. Interacts with phosphorylated CREB1. Interacts with CITED4 (C-terminal region). Interacts (via the TAZ-type 1 domain) with HIF1A. Interacts with SRCAP, CARM1, ELF3, MLLT7/FOXO4, N4BP2, NCOA1, NCOA3, NCOA6, PCAF, DDX5, DDX17, PELP1, PML, SMAD1, SMAD2, SMAD3, SPIB and TRERF1. Interacts with KLF1; the interaction results in acetylation of KLF1 and enhancement of its transcriptional activity. Interacts with MTDH. Interacts with NFATC4. Interacts with MAFG; the interaction acetylates MAFG in the basic region and stimulates NFE2 transcriptional activity through increasing its DNA-binding activity. Interacts with IRF2; the interaction acetylates IRF2 and regulates its activity on the H4 promoter. Interacts with IRF3 (when phosphorylated); forming the dsRNA-activated factor 1 (DRAF1), a complex which activates the transcription of the type I interferon genes. Interacts (via N-terminus) with SS18L1/CREST (via C-terminus). Interacts with MECOM. Interacts with CITED1 (via C-terminus). Interacts with FOXO1; the interaction acetylates FOXO1 and inhibits its transcriptional activity. Interacts with NPAS2, CLOCK and BMAL1. Interacts with ASF1A and ASF1B; this promotes histone acetylation. Interacts with acetylated TP53/p53 and with the acetylated histones H3 and H4. Interacts (via transactivation domain and C-terminus) with PCNA; the interaction occurs on chromatin in UV-irradiated damaged cells. Interacts with DHX9 (via N-terminus); this interaction mediates association with RNA polymerase II holoenzyme and stimulates CREB-dependent transcriptional activation. Interacts with SMAD4; negatively regulated by ZBTB7A. Interacts with DUX4 (via C-terminus). Forms a complex with KMT2A and CREB1. Interacts with DDX3X; this interaction may facilitate HNF4A acetylation. Interacts with MSX1; the interaction may inhibit MSX1 autoinactivation. Interacts with ACSS2. In terms of assembly, (Microbial infection) Interacts with HTLV-1 Tax, p30II and HBZ. As to quaternary structure, (Microbial infection) Interacts with human herpes virus 8/HHV-8 protein vIRF-1; this interaction inhibits CREBBP binding to IRF3. (Microbial infection) Interacts with HIV-1 Tat. Post-translationally, methylation of the KIX domain by CARM1 blocks association with CREB. This results in the blockade of CREB signaling, and in activation of apoptotic response. Phosphorylated by CHUK/IKKA at Ser-1382 and Ser-1386; these phosphorylations promote cell growth by switching the binding preference of CREBBP from TP53 to NF-kappa-B. Phosphorylated by _ at Ser-124 in response to DNA damage, promoting interaction with MRE11 and lactylation of MRE11. In terms of processing, sumoylation negatively regulates transcriptional activity via the recruitment of DAAX. Post-translationally, autoacetylation is required for binding to protein substrates, such as acetylated histones and acetylated TP53/p53. Autoacetylation is induced by glucose and fatty acids.

Its subcellular location is the cytoplasm. It is found in the nucleus. It catalyses the reaction L-lysyl-[histone] + acetyl-CoA = N(6)-acetyl-L-lysyl-[histone] + CoA + H(+). The enzyme catalyses L-lysyl-[protein] + acetyl-CoA = N(6)-acetyl-L-lysyl-[protein] + CoA + H(+). It carries out the reaction (S)-lactoyl-CoA + L-lysyl-[protein] = N(6)-[(S)-lactoyl]-L-lysyl-[protein] + CoA + H(+). Its function is as follows. Acetylates histones, giving a specific tag for transcriptional activation. Mediates acetylation of histone H3 at 'Lys-18' and 'Lys-27' (H3K18ac and H3K27ac, respectively). Also acetylates non-histone proteins, like DDX21, FBL, IRF2, MAFG, NCOA3, POLR1E/PAF53 and FOXO1. Binds specifically to phosphorylated CREB and enhances its transcriptional activity toward cAMP-responsive genes. Acts as a coactivator of ALX1. Acts as a circadian transcriptional coactivator which enhances the activity of the circadian transcriptional activators: NPAS2-BMAL1 and CLOCK-BMAL1 heterodimers. Acetylates PCNA; acetylation promotes removal of chromatin-bound PCNA and its degradation during nucleotide excision repair (NER). Acetylates POLR1E/PAF53, leading to decreased association of RNA polymerase I with the rDNA promoter region and coding region. Acetylates DDX21, thereby inhibiting DDX21 helicase activity. Acetylates FBL, preventing methylation of 'Gln-105' of histone H2A (H2AQ104me). In addition to protein acetyltransferase, can use different acyl-CoA substrates, such as lactoyl-CoA, and is able to mediate protein lactylation. Catalyzes lactylation of MRE11 in response to DNA damage, thereby promoting DNA double-strand breaks (DSBs) via homologous recombination (HR). Functions as a transcriptional coactivator for SMAD4 in the TGF-beta signaling pathway. In Homo sapiens (Human), this protein is CREB-binding protein.